A 914-amino-acid polypeptide reads, in one-letter code: Alanine--tRNA ligase (914 aa).

Histidine 613, histidine 617, cysteine 717, and histidine 721 together coordinate Zn(2+).

Belongs to the class-II aminoacyl-tRNA synthetase family. The cofactor is Zn(2+).

The protein localises to the cytoplasm. It carries out the reaction tRNA(Ala) + L-alanine + ATP = L-alanyl-tRNA(Ala) + AMP + diphosphate. In terms of biological role, catalyzes the attachment of alanine to tRNA(Ala) in a two-step reaction: alanine is first activated by ATP to form Ala-AMP and then transferred to the acceptor end of tRNA(Ala). Also edits incorrectly charged Ser-tRNA(Ala) and Gly-tRNA(Ala) via its editing domain. This chain is Alanine--tRNA ligase, found in Pyrococcus abyssi (strain GE5 / Orsay).